The following is a 430-amino-acid chain: Phosphomethylpyrimidine synthase 2 (430 aa).

Substrate-binding positions include Asn-66, Met-95, Tyr-124, His-164, Ser-186 to Gly-188, Asp-227 to Arg-230, and Glu-266. Residue His-270 participates in Zn(2+) binding. Residue Tyr-293 coordinates substrate. His-334 contributes to the Zn(2+) binding site. 3 residues coordinate [4Fe-4S] cluster: Cys-411, Cys-414, and Cys-418.

Belongs to the ThiC family. As to quaternary structure, homodimer. [4Fe-4S] cluster is required as a cofactor.

It carries out the reaction 5-amino-1-(5-phospho-beta-D-ribosyl)imidazole + S-adenosyl-L-methionine = 4-amino-2-methyl-5-(phosphooxymethyl)pyrimidine + CO + 5'-deoxyadenosine + formate + L-methionine + 3 H(+). It participates in cofactor biosynthesis; thiamine diphosphate biosynthesis. Its function is as follows. Catalyzes the synthesis of the hydroxymethylpyrimidine phosphate (HMP-P) moiety of thiamine from aminoimidazole ribotide (AIR) in a radical S-adenosyl-L-methionine (SAM)-dependent reaction. This is Phosphomethylpyrimidine synthase 2 from Syntrophotalea carbinolica (strain DSM 2380 / NBRC 103641 / GraBd1) (Pelobacter carbinolicus).